Here is a 368-residue protein sequence, read N- to C-terminus: MNNKIALYCRSGFEKECAAEITEKAAQLEIFGFARVKENSGYVLFECYQLEDADRLIREIPFREFIFARQMMVVGELLKDLPPEDRVSPIVGMLVGVIEKAGELRVEVADTNESKELLKFCRKLTVPLRSALREQKILSARENAHRPVVHVFFIAPGCCYVGYSYSNNNSPFYMGIPRLKFPSDAPSRSTLKLEEAFHVFIPADEWEERLASGMHAVDLGACPGGWTYQLVQRSMMIQAVDNGLMAQSLMDTGQVTHHRADGFKYEPTRSNIYWLVCDMVEKPTKVTQLITKWLVNGWCREAIFNLKLPMKKRYEEVVQNLAMMDEQLKENGINADIHAKQLYHDREEVTVHVRRIWSGAPGRRDERY.

S-adenosyl-L-methionine contacts are provided by residues S189, 222–225 (CPGG), D241, D261, and D278. The Proton acceptor role is filled by K307.

The protein belongs to the class I-like SAM-binding methyltransferase superfamily. RNA methyltransferase RlmE family. RlmM subfamily. In terms of assembly, monomer.

It is found in the cytoplasm. The catalysed reaction is cytidine(2498) in 23S rRNA + S-adenosyl-L-methionine = 2'-O-methylcytidine(2498) in 23S rRNA + S-adenosyl-L-homocysteine + H(+). Its function is as follows. Catalyzes the 2'-O-methylation at nucleotide C2498 in 23S rRNA. This is Ribosomal RNA large subunit methyltransferase M from Yersinia pseudotuberculosis serotype O:1b (strain IP 31758).